The primary structure comprises 364 residues: Putative protein C31H2.4 (364 aa).

2 VOC domains span residues 6–134 and 161–320; these read AIHH…LGEF and LMDH…IFSK. Fe cation is bound by residues histidine 164, histidine 248, and glutamate 331.

This sequence belongs to the 4HPPD family. The cofactor is Fe cation.

The polypeptide is Putative protein C31H2.4 (Caenorhabditis elegans).